Here is a 559-residue protein sequence, read N- to C-terminus: Regulatory protein PHO2 (559 aa).

Disordered regions lie at residues 16-88 (ATDL…KGEA), 132-158 (LRKK…DYDR), 293-333 (INSN…AKDN), and 534-559 (PTDS…HRWI). Low complexity-rich tracts occupy residues 24-52 (HDQQ…IQTQ) and 63-74 (NDMSASSNASDS). A DNA-binding region (homeobox) is located at residues 77 to 136 (QRPKRTRAKGEALDVLKRKFEINPTPSLVERKKISDLIGMPEKNVRIWFQNRRAKLRKKQ). A compositionally biased stretch (polar residues) spans 141–151 (KDTIPSSQSRD). Residues 293 to 307 (INSNNTSDKNNSNTN) show a composition bias toward low complexity. The segment covering 308–323 (NDDDNDDNSNEDNDNS) has biased composition (acidic residues). The segment covering 324-333 (SEDKRNAKDN) has biased composition (basic and acidic residues). At T542 the chain carries Phosphothreonine.

The protein resides in the nucleus. Its function is as follows. Regulator in phosphate metabolism and acts as a derepressor of another central regulator PHO5. Binds to the upstream activator sequence (UAS) of PHO5. It also binds to the TRP4, HIS4, and CYC1 promoters. This is Regulatory protein PHO2 (PHO2) from Saccharomyces cerevisiae (strain ATCC 204508 / S288c) (Baker's yeast).